The primary structure comprises 276 residues: Glutamate racemase (276 aa).

Residues 12-13 (DS) and 44-45 (YG) contribute to the substrate site. Residue Cys76 is the Proton donor/acceptor of the active site. A substrate-binding site is contributed by 77–78 (NT). Cys187 acts as the Proton donor/acceptor in catalysis. 188 to 189 (TH) is a binding site for substrate.

This sequence belongs to the aspartate/glutamate racemases family.

It catalyses the reaction L-glutamate = D-glutamate. It functions in the pathway cell wall biogenesis; peptidoglycan biosynthesis. Its function is as follows. Provides the (R)-glutamate required for cell wall biosynthesis. This chain is Glutamate racemase, found in Granulibacter bethesdensis (strain ATCC BAA-1260 / CGDNIH1).